The following is a 281-amino-acid chain: Undecaprenyl-diphosphatase (281 aa).

A run of 8 helical transmembrane segments spans residues 1–21 (MNVL…FLPI), 45–65 (WTAF…IYFA), 93–113 (SKLG…GLVF), 125–145 (LIVI…SEVV), 155–175 (ISWL…VPGA), 195–215 (AARF…LLEF), 227–247 (FLVL…TIAF), and 256–276 (STNV…WMVF).

It belongs to the UppP family.

The protein localises to the cell inner membrane. The catalysed reaction is di-trans,octa-cis-undecaprenyl diphosphate + H2O = di-trans,octa-cis-undecaprenyl phosphate + phosphate + H(+). Catalyzes the dephosphorylation of undecaprenyl diphosphate (UPP). Confers resistance to bacitracin. The sequence is that of Undecaprenyl-diphosphatase from Syntrophobacter fumaroxidans (strain DSM 10017 / MPOB).